The sequence spans 352 residues: Non-disjunction protein 1 (352 aa).

Interacts with MPS3.

The protein localises to the nucleus. The protein resides in the chromosome. Its subcellular location is the telomere. Functionally, required for telomeric clustering (bouquet stage) during meiosis 1 prophase, formation and efficient homolog pairing, meiosis 1 disjunction, and telomere deletion during meiosis. Also promotes meiotic recombination. This is Non-disjunction protein 1 (NDJ1) from Saccharomyces cerevisiae (strain ATCC 204508 / S288c) (Baker's yeast).